Reading from the N-terminus, the 157-residue chain is Ribosome maturation factor RimP (157 aa).

This sequence belongs to the RimP family.

Its subcellular location is the cytoplasm. Its function is as follows. Required for maturation of 30S ribosomal subunits. The polypeptide is Ribosome maturation factor RimP (Ligilactobacillus salivarius (strain UCC118) (Lactobacillus salivarius)).